The sequence spans 252 residues: Trans-aconitate 2-methyltransferase (252 aa).

The protein belongs to the methyltransferase superfamily. Tam family.

The protein localises to the cytoplasm. The enzyme catalyses trans-aconitate + S-adenosyl-L-methionine = (E)-3-(methoxycarbonyl)pent-2-enedioate + S-adenosyl-L-homocysteine. In terms of biological role, catalyzes the S-adenosylmethionine monomethyl esterification of trans-aconitate. This is Trans-aconitate 2-methyltransferase from Escherichia coli O17:K52:H18 (strain UMN026 / ExPEC).